We begin with the raw amino-acid sequence, 400 residues long: F-box/kelch-repeat protein At4g19870 (400 aa).

Residues 1 to 10 are compositionally biased toward basic and acidic residues; that stretch reads MKRQAKPPEK. Positions 1 to 33 are disordered; it reads MKRQAKPPEKKTKRTTNASSPTPSSSSPSLSSL. Residues 19 to 33 show a composition bias toward low complexity; sequence SSPTPSSSSPSLSSL. Positions 27 to 73 constitute an F-box domain; that stretch reads SPSLSSLPDEIVENCLARISRSYYPTLSIVSKSFRSIISSTELYVAR. Kelch repeat units follow at residues 146–192, 194–240, and 242–284; these read EIYV…LYDG, IYVI…RIAE, and EGKI…SVLY.

The polypeptide is F-box/kelch-repeat protein At4g19870 (Arabidopsis thaliana (Mouse-ear cress)).